A 285-amino-acid chain; its full sequence is Bifunctional protein FolD (285 aa).

NADP(+)-binding positions include Gly165–Ser167 and Ser190.

This sequence belongs to the tetrahydrofolate dehydrogenase/cyclohydrolase family. As to quaternary structure, homodimer.

The catalysed reaction is (6R)-5,10-methylene-5,6,7,8-tetrahydrofolate + NADP(+) = (6R)-5,10-methenyltetrahydrofolate + NADPH. It catalyses the reaction (6R)-5,10-methenyltetrahydrofolate + H2O = (6R)-10-formyltetrahydrofolate + H(+). It functions in the pathway one-carbon metabolism; tetrahydrofolate interconversion. Its function is as follows. Catalyzes the oxidation of 5,10-methylenetetrahydrofolate to 5,10-methenyltetrahydrofolate and then the hydrolysis of 5,10-methenyltetrahydrofolate to 10-formyltetrahydrofolate. The sequence is that of Bifunctional protein FolD from Cupriavidus metallidurans (strain ATCC 43123 / DSM 2839 / NBRC 102507 / CH34) (Ralstonia metallidurans).